Reading from the N-terminus, the 341-residue chain is Elongation factor Ts, mitochondrial 2 (341 aa).

The N-terminal 17 residues, 1–17, are a transit peptide targeting the mitochondrion; it reads MLAARFASRAFPRTRLY.

It belongs to the EF-Ts family.

Its subcellular location is the mitochondrion. Functionally, associates with the EF-Tu.GDP complex and induces the exchange of GDP to GTP. It remains bound to the aminoacyl-tRNA.EF-Tu.GTP complex up to the GTP hydrolysis stage on the ribosome. This is Elongation factor Ts, mitochondrial 2 from Postia placenta (strain ATCC 44394 / Madison 698-R) (Brown rot fungus).